An 89-amino-acid polypeptide reads, in one-letter code: Large ribosomal subunit protein eL43 (89 aa).

A disordered region spans residues 1-28 (MVKKSKVGSTGRFGARYGRKAKRTVKDI). The segment at 38–59 (CPKCDRPGVKRTHAGIWKCRKC) adopts a C4-type zinc-finger fold.

Belongs to the eukaryotic ribosomal protein eL43 family. It depends on Zn(2+) as a cofactor.

This chain is Large ribosomal subunit protein eL43, found in Methanosphaera stadtmanae (strain ATCC 43021 / DSM 3091 / JCM 11832 / MCB-3).